The chain runs to 148 residues: UPF0260 protein ESA_01462 (148 aa).

The protein belongs to the UPF0260 family.

In Cronobacter sakazakii (strain ATCC BAA-894) (Enterobacter sakazakii), this protein is UPF0260 protein ESA_01462.